The following is a 152-amino-acid chain: Avidin (152 aa).

The N-terminal stretch at 1-24 (MVHATSPLLLLLLLSLALVAPGLS) is a signal peptide. One can recognise an Avidin-like domain in the interval 26-149 (RKCSLTGKWT…GINIFTRLRT (124 aa)). Cysteines 28 and 107 form a disulfide. Asn-41 carries N-linked (GlcNAc...) asparagine glycosylation. Tyr-57 provides a ligand contact to biotin.

Belongs to the avidin/streptavidin family. In terms of assembly, homotetramer. Post-translationally, N-linked glycan at Asn-41 consists of GlcNAc(beta1-2)Man(alpha1-3)[GlcNAc(beta1-4)][Man(alpha1-?)Man(alpha1-6)] Man(beta1-4)GlcNAc(beta1-4)GlcNAc. In terms of tissue distribution, synthesized in hen oviduct and concentrated in egg white (where it represents 0.05% of the total protein).

Its subcellular location is the secreted. The biological function of avidin is not known. Forms a strong non-covalent specific complex with biotin (one molecule of biotin per subunit of avidin). In Gallus gallus (Chicken), this protein is Avidin (AVD).